A 218-amino-acid polypeptide reads, in one-letter code: Peptide methionine sulfoxide reductase MsrA (218 aa).

Cys57 is a catalytic residue.

Belongs to the MsrA Met sulfoxide reductase family.

It carries out the reaction L-methionyl-[protein] + [thioredoxin]-disulfide + H2O = L-methionyl-(S)-S-oxide-[protein] + [thioredoxin]-dithiol. The catalysed reaction is [thioredoxin]-disulfide + L-methionine + H2O = L-methionine (S)-S-oxide + [thioredoxin]-dithiol. Its function is as follows. Has an important function as a repair enzyme for proteins that have been inactivated by oxidation. Catalyzes the reversible oxidation-reduction of methionine sulfoxide in proteins to methionine. The chain is Peptide methionine sulfoxide reductase MsrA from Brucella abortus (strain S19).